Reading from the N-terminus, the 209-residue chain is Large ribosomal subunit protein uL3 (209 aa).

The interval 117-142 is disordered; it reads FQGPIKRHGQSRGPETHGSRYHRRPG.

Belongs to the universal ribosomal protein uL3 family. Part of the 50S ribosomal subunit. Forms a cluster with proteins L14 and L19.

Functionally, one of the primary rRNA binding proteins, it binds directly near the 3'-end of the 23S rRNA, where it nucleates assembly of the 50S subunit. The chain is Large ribosomal subunit protein uL3 from Clostridioides difficile (strain 630) (Peptoclostridium difficile).